The following is a 1407-amino-acid chain: DNA-directed RNA polymerase subunit beta' (1407 aa).

C70, C72, C85, and C88 together coordinate Zn(2+). Mg(2+)-binding residues include D460, D462, and D464. 4 residues coordinate Zn(2+): C814, C888, C895, and C898. N6-acetyllysine is present on K972.

This sequence belongs to the RNA polymerase beta' chain family. As to quaternary structure, the RNAP catalytic core consists of 2 alpha, 1 beta, 1 beta' and 1 omega subunit. When a sigma factor is associated with the core the holoenzyme is formed, which can initiate transcription. Mg(2+) is required as a cofactor. Requires Zn(2+) as cofactor.

It catalyses the reaction RNA(n) + a ribonucleoside 5'-triphosphate = RNA(n+1) + diphosphate. Its function is as follows. DNA-dependent RNA polymerase catalyzes the transcription of DNA into RNA using the four ribonucleoside triphosphates as substrates. In Shigella boydii serotype 18 (strain CDC 3083-94 / BS512), this protein is DNA-directed RNA polymerase subunit beta'.